A 951-amino-acid chain; its full sequence is Metal transporter CNNM1 (951 aa).

A helical membrane pass occupies residues 23–43 (AVLLLFFSLSPRPPAAAAWLL). The interval 116–135 (GGVAPSAVPTRPPGPQRCRE) is disordered. The CNNM transmembrane domain maps to 218-414 (LLPPAWLRAL…DPYSDLVKEE (197 aa)). Transmembrane regions (helical) follow at residues 222-242 (AWLRALGALLLLALSALFSGL), 282-302 (LLCTLLLGQAGANAALAGWLY), and 321-341 (IHFPWLPALVCTGAVFLGAEI). CBS domains lie at 433–495 (LTPL…CTPL) and 502–568 (YNRP…ILDE). Composition is skewed to polar residues over residues 731–740 (SRCSGLNRSE) and 814–824 (KAPTTRGTPQT). 2 disordered regions span residues 731–753 (SRCSGLNRSESPNRERSDFGGSN) and 795–830 (MDSSPQSPDMEAFTDGDSTKAPTTRGTPQTPKDDPA). Phosphothreonine occurs at positions 821 and 824. Ser850 bears the Phosphoserine mark. Positions 920-951 (KLLRTLSGQKRKRSPEGERTSEDNSNLTPLIT) are disordered. Positions 942–951 (DNSNLTPLIT) are enriched in polar residues.

It belongs to the ACDP family. Restricted to brain and testis.

It is found in the cell membrane. Its function is as follows. Probable metal transporter. This is Metal transporter CNNM1 (CNNM1) from Homo sapiens (Human).